Consider the following 807-residue polypeptide: FAD-linked oxidoreductase pytB (807 aa).

Residues 1-18 (MRFLGIAAVATFSTVVSA) form the signal peptide. Asn45, Asn106, Asn120, Asn242, Asn295, Asn351, Asn419, and Asn699 each carry an N-linked (GlcNAc...) asparagine glycan. The 172-residue stretch at 60–231 (FDELPVLLAY…VEFTLSLTSI (172 aa)) folds into the FAD-binding PCMH-type domain.

This sequence belongs to the oxygen-dependent FAD-linked oxidoreductase family. FAD serves as cofactor.

The protein operates within secondary metabolite biosynthesis. Functionally, FAD-linked oxidoreductase; part of the gene cluster that mediates the biosynthesis of pyranterreones, a family of antioxidative compounds. The first step of pyranonigrins biosynthesis is performed by the hybrid PKS-NRPS synthetase pytA that condenses 4 malonyl-CoA units ato the acetyl starter unit by the modular PKS of pytA. The acyl chain is then connected to an L-serine through the amide bond by the modular NRPS of pytA. A tetramic acid is formed and released from the PKS-NRPS pytA to give pyranterreone 5 with the help of the thioesterase pytI. Pyranterreone 5 could be methylated by pytC to afford pyranterreone 6. Both pyranterreones 5 and 6 are subsequently oxidized by the FAD-linked oxidoreductase pytB and the cytochrome P450 monooxygenase pytD to form the fused gamma-pyrone core, resulting in pyranterreones 7 and 11, respectively. The hydroxy group at C-8 of pyranterreones 7 and 11 are dehydrated by the aspartyl protease pytH to form a delta-7 double bond to give pyranterreones 3 and 1, 2 accordingly. The exo-methylene of pyranterreone 3 could be reduced into a pendant methyl by reductase pytE to provide pyranterreone 4, also known as cordylactam. Pyranterreone 4 can be reconverted to pyranterreone 3 through pytB-catalyzed dehydrogenation or further oxidized to pyranterreones 9 and 10. This Aspergillus terreus (strain NIH 2624 / FGSC A1156) protein is FAD-linked oxidoreductase pytB.